The sequence spans 382 residues: MIOREX complex component 5 (382 aa).

Residues 1-12 (MRRTFSQLATRL) constitute a mitochondrion transit peptide.

As to quaternary structure, associates with the mitochondrial ribosome.

It is found in the mitochondrion. Its function is as follows. Component of MIOREX complexes, large expressome-like assemblies of ribosomes with factors involved in all the steps of post-transcriptional gene expression. The sequence is that of MIOREX complex component 5 from Saccharomyces cerevisiae (strain ATCC 204508 / S288c) (Baker's yeast).